Reading from the N-terminus, the 78-residue chain is D-alanyl carrier protein (78 aa).

Positions methionine 1–lysine 78 constitute a Carrier domain. Residue serine 36 is modified to O-(pantetheine 4'-phosphoryl)serine.

This sequence belongs to the DltC family. Post-translationally, 4'-phosphopantetheine is transferred from CoA to a specific serine of apo-DCP.

The protein resides in the cytoplasm. It functions in the pathway cell wall biogenesis; lipoteichoic acid biosynthesis. Its function is as follows. Carrier protein involved in the D-alanylation of lipoteichoic acid (LTA). The loading of thioester-linked D-alanine onto DltC is catalyzed by D-alanine--D-alanyl carrier protein ligase DltA. The DltC-carried D-alanyl group is further transferred to cell membrane phosphatidylglycerol (PG) by forming an ester bond, probably catalyzed by DltD. D-alanylation of LTA plays an important role in modulating the properties of the cell wall in Gram-positive bacteria, influencing the net charge of the cell wall. The chain is D-alanyl carrier protein from Bacillus pumilus (strain SAFR-032).